The sequence spans 46 residues: Esculentin-1R (46 aa).

Cysteine 40 and cysteine 46 form a disulfide bridge.

As to expression, expressed by the skin glands.

It is found in the secreted. In terms of biological role, shows antibacterial activity against representative Gram-negative and Gram-positive bacterial species, and hemolytic activity. This chain is Esculentin-1R, found in Pelophylax ridibundus (Marsh frog).